Consider the following 96-residue polypeptide: UPF0235 protein VC_0458 (96 aa).

It belongs to the UPF0235 family.

In Vibrio cholerae serotype O1 (strain ATCC 39315 / El Tor Inaba N16961), this protein is UPF0235 protein VC_0458.